Here is a 1163-residue protein sequence, read N- to C-terminus: Carbamoyl phosphate synthase large chain (1163 aa).

The segment at 1–456 (MPKRQDIKSI…SLQKALRGLE (456 aa)) is carboxyphosphate synthetic domain. Arginine 129 contacts ATP. The interval 148 to 170 (LANATDIKDHDRKSHEAERSALK) is disordered. Basic and acidic residues predominate over residues 153-170 (DIKDHDRKSHEAERSALK). The region spanning 185–381 (LENQWNLGEG…IAKIAAKLAV (197 aa)) is the ATP-grasp 1 domain. ATP contacts are provided by arginine 222, glycine 228, glycine 229, glutamate 261, valine 263, glutamate 268, glycine 294, valine 295, histidine 296, glutamine 338, and glutamate 352. Mg(2+) is bound by residues glutamine 338, glutamate 352, and asparagine 354. Mn(2+)-binding residues include glutamine 338, glutamate 352, and asparagine 354. The tract at residues 457-614 (TGLTGLDEIE…PFVGAARSEA (158 aa)) is oligomerization domain. Residues 615 to 1026 (QVSDRKKVVI…AFAKSQLGAG (412 aa)) are carbamoyl phosphate synthetic domain. The ATP-grasp 2 domain maps to 743 to 955 (QKLLMKLDLN…IAKIAARVMA (213 aa)). Residues arginine 779, serine 839, leucine 841, glutamate 846, glycine 871, isoleucine 872, histidine 873, serine 874, glutamine 914, and glutamate 926 each contribute to the ATP site. Mg(2+) contacts are provided by glutamine 914, glutamate 926, and asparagine 928. Glutamine 914, glutamate 926, and asparagine 928 together coordinate Mn(2+). The region spanning 1027–1163 (VDLPRDGTVF…VRPLQSYFET (137 aa)) is the MGS-like domain. The allosteric domain stretch occupies residues 1027-1163 (VDLPRDGTVF…VRPLQSYFET (137 aa)).

Belongs to the CarB family. In terms of assembly, composed of two chains; the small (or glutamine) chain promotes the hydrolysis of glutamine to ammonia, which is used by the large (or ammonia) chain to synthesize carbamoyl phosphate. Tetramer of heterodimers (alpha,beta)4. It depends on Mg(2+) as a cofactor. The cofactor is Mn(2+).

It catalyses the reaction hydrogencarbonate + L-glutamine + 2 ATP + H2O = carbamoyl phosphate + L-glutamate + 2 ADP + phosphate + 2 H(+). The catalysed reaction is hydrogencarbonate + NH4(+) + 2 ATP = carbamoyl phosphate + 2 ADP + phosphate + 2 H(+). Its pathway is amino-acid biosynthesis; L-arginine biosynthesis; carbamoyl phosphate from bicarbonate: step 1/1. It participates in pyrimidine metabolism; UMP biosynthesis via de novo pathway; (S)-dihydroorotate from bicarbonate: step 1/3. Large subunit of the glutamine-dependent carbamoyl phosphate synthetase (CPSase). CPSase catalyzes the formation of carbamoyl phosphate from the ammonia moiety of glutamine, carbonate, and phosphate donated by ATP, constituting the first step of 2 biosynthetic pathways, one leading to arginine and/or urea and the other to pyrimidine nucleotides. The large subunit (synthetase) binds the substrates ammonia (free or transferred from glutamine from the small subunit), hydrogencarbonate and ATP and carries out an ATP-coupled ligase reaction, activating hydrogencarbonate by forming carboxy phosphate which reacts with ammonia to form carbamoyl phosphate. The chain is Carbamoyl phosphate synthase large chain from Rhizobium meliloti (strain 1021) (Ensifer meliloti).